The sequence spans 439 residues: Proline--tRNA ligase (439 aa).

This sequence belongs to the class-II aminoacyl-tRNA synthetase family. ProS type 2 subfamily. As to quaternary structure, homodimer.

It localises to the cytoplasm. The enzyme catalyses tRNA(Pro) + L-proline + ATP = L-prolyl-tRNA(Pro) + AMP + diphosphate. In terms of biological role, catalyzes the attachment of proline to tRNA(Pro) in a two-step reaction: proline is first activated by ATP to form Pro-AMP and then transferred to the acceptor end of tRNA(Pro). The polypeptide is Proline--tRNA ligase (Hyphomonas neptunium (strain ATCC 15444)).